The following is an 873-amino-acid chain: Zinc fingers and homeoboxes protein 1 (873 aa).

Positions M1–N63 are disordered. Over residues Q18 to E30 the composition is skewed to acidic residues. Position 36 is a phosphothreonine (T36). Residues S45, S47, and S48 each carry the phosphoserine modification. C2H2-type zinc fingers lie at residues Y70–H93 and Y102–H125. K159 is covalently cross-linked (Glycyl lysine isopeptide (Lys-Gly) (interchain with G-Cter in SUMO2)). A disordered region spans residues V198 to A247. S202 bears the Phosphoserine mark. A compositionally biased stretch (basic and acidic residues) spans S207–N221. Residues E223 to T238 show a composition bias toward low complexity. The segment at N272 to P432 is required for dimerization. The segment at N272 to F564 is required for interaction with NFYA. The homeobox 1 DNA-binding region spans N284–E346. The disordered stretch occupies residues Q430–P455. Residues K441 and K485 each participate in a glycyl lysine isopeptide (Lys-Gly) (interchain with G-Cter in SUMO2) cross-link. The segment at residues S464–Q526 is a DNA-binding region (homeobox 2). 3 disordered regions span residues I540–A568, D627–I664, and S731–N767. The segment covering A551 to S560 has biased composition (low complexity). The homeobox 3 DNA-binding region spans P569 to E631. K629 participates in a covalent cross-link: Glycyl lysine isopeptide (Lys-Gly) (interchain with G-Cter in SUMO2). The residue at position 648 (S648) is a Phosphoserine. The segment at residues G660 to W722 is a DNA-binding region (homeobox 4). The segment at L734 to T768 is required for nuclear localization. Residues L740–K764 are compositionally biased toward basic residues. Position 774 is a phosphoserine (S774). The homeobox 5 DNA-binding region spans K777 to F832. Residues I829–D873 form a disordered region. Residues L831–T857 are compositionally biased toward acidic residues. Residues L831–D873 form a required for repressor activity region. Residues H863–D873 show a composition bias toward basic residues.

The protein belongs to the ZHX family. In terms of assembly, forms homodimers. Heterodimer (via HD1 domain) with ZHX2 (via HD1 domain). Also forms a heterodimer with ZHX3 which is a prerequisite for repressor activity. Interacts with ATF7IP and NFYA. Interacts (via homeobox domains) with DNMT3B (via PWWP domain). Ubiquitously expressed.

The protein resides in the nucleus. In terms of biological role, acts as a transcriptional repressor. Increases DNMT3B-mediated repressive transcriptional activity when DNMT3B is tethered to DNA. May link molecule between DNMT3B and other co-repressor proteins. This Rattus norvegicus (Rat) protein is Zinc fingers and homeoboxes protein 1 (Zhx1).